A 344-amino-acid chain; its full sequence is Holliday junction branch migration complex subunit RuvB (344 aa).

The tract at residues 1 to 182 is large ATPase domain (RuvB-L); it reads MRIELLNTPP…FGINSRFDYY (182 aa). ATP-binding positions include Ile-21, Arg-22, Gly-63, Lys-66, Thr-67, Thr-68, 129 to 131, Arg-172, Tyr-182, and Arg-219; that span reads EDF. A Mg(2+)-binding site is contributed by Thr-67. Residues 183-253 form a small ATPAse domain (RuvB-S) region; sequence APELLEGIIR…IAMKTLDCLE (71 aa). The head domain (RuvB-H) stretch occupies residues 256–344; the sequence is EEGLDDMDKK…ISLFDAQPTS (89 aa). DNA-binding residues include Arg-311 and Arg-316.

The protein belongs to the RuvB family. As to quaternary structure, homohexamer. Forms an RuvA(8)-RuvB(12)-Holliday junction (HJ) complex. HJ DNA is sandwiched between 2 RuvA tetramers; dsDNA enters through RuvA and exits via RuvB. An RuvB hexamer assembles on each DNA strand where it exits the tetramer. Each RuvB hexamer is contacted by two RuvA subunits (via domain III) on 2 adjacent RuvB subunits; this complex drives branch migration. In the full resolvosome a probable DNA-RuvA(4)-RuvB(12)-RuvC(2) complex forms which resolves the HJ.

Its subcellular location is the cytoplasm. It carries out the reaction ATP + H2O = ADP + phosphate + H(+). The RuvA-RuvB-RuvC complex processes Holliday junction (HJ) DNA during genetic recombination and DNA repair, while the RuvA-RuvB complex plays an important role in the rescue of blocked DNA replication forks via replication fork reversal (RFR). RuvA specifically binds to HJ cruciform DNA, conferring on it an open structure. The RuvB hexamer acts as an ATP-dependent pump, pulling dsDNA into and through the RuvAB complex. RuvB forms 2 homohexamers on either side of HJ DNA bound by 1 or 2 RuvA tetramers; 4 subunits per hexamer contact DNA at a time. Coordinated motions by a converter formed by DNA-disengaged RuvB subunits stimulates ATP hydrolysis and nucleotide exchange. Immobilization of the converter enables RuvB to convert the ATP-contained energy into a lever motion, pulling 2 nucleotides of DNA out of the RuvA tetramer per ATP hydrolyzed, thus driving DNA branch migration. The RuvB motors rotate together with the DNA substrate, which together with the progressing nucleotide cycle form the mechanistic basis for DNA recombination by continuous HJ branch migration. Branch migration allows RuvC to scan DNA until it finds its consensus sequence, where it cleaves and resolves cruciform DNA. The protein is Holliday junction branch migration complex subunit RuvB of Pelodictyon phaeoclathratiforme (strain DSM 5477 / BU-1).